Reading from the N-terminus, the 237-residue chain is MSSLKKILGLKGKGKKSKKLGIAPPPYEEDTSMEYAPSAPIDKSYFGVDEMDTHDPNQLRYEKSFFTVKMTVRSNRPFRTYSDVAAAVSHWDHMYIGMAGKRPFYKILAFLGSSNLKATPAVLADQGQPEYHAHCEGRAYLPHRMGKTPPMLNVPEHFRRPFNIGLYKGTIELTMTIYDDESLEAAPMIWDHFNSSKFSDFREKALMFGLIVEEEASGAWVLDSVRHSKWASLASSF.

A compositionally biased stretch (low complexity) spans 1–10 (MSSLKKILGL). The interval 1–23 (MSSLKKILGLKGKGKKSKKLGIA) is disordered. Residues 2–4 (SSL) carry the dynamin binding motif. The short motif at 24–27 (PPPY) is the PPXY motif element. The PTAP/PSAP motif motif lies at 37–40 (PSAP).

Belongs to the vesiculoviruses matrix protein family. Homomultimer. Interacts with viral nucleocapsid; this interaction contributes to the virion assembly. Interacts with the viral envelope glycoprotein; this interaction contributes to the virion assembly. Interacts with host RAE1-NUP98 complex. Interacts with host NEDD4 and TSG101. Interacts with host dynamin. Interacts with host NDUFAF4; the interaction inhibits viral propagation and is independent of interferon activation. Interacts with host GTF2H5; the interaction may inhibit host transcription. In terms of processing, phosphorylated by host.

The protein resides in the virion. Its subcellular location is the host endomembrane system. The protein localises to the host nucleus membrane. It is found in the host nucleus. It localises to the host cytoplasm. Its function is as follows. Forms a double layer around the helical nucleocapsid, the inner matrix layer binding to the N helix and the outer matrix layer binding to the envelope glycoprotein. Plays a major role in assembly and budding of virion, by recruiting cellular partners of the ESCRT complexes that play a key role in releasing the budding particle from the host membrane. Condensates the ribonucleocapsid core during virus assembly. Inhibits the host mRNA nuclear export thereby inducing the shut off of cellular transcription and preventing the interferon signaling and the establishment of antiviral state in infected cells. This shutoff presumably inhibits interferon signaling and thus establishment of antiviral state in virus infected cells. Induces cell-rounding, cytoskeleton disorganization and apoptosis in infected cell. Inhibits host transcription, possibly through interaction with host DNA repair factor IIH/TFIIH GTF2H5 subunit. The protein is Matrix protein (M) of Aedes (Bovine).